The sequence spans 1268 residues: SR-related and CTD-associated factor 8 (1268 aa).

Residues 1 to 139 enclose the CID domain; it reads MEAVKTFNSE…PLLDMAAGIP (139 aa). Residue Thr-6 is modified to Phosphothreonine. A Glycyl lysine isopeptide (Lys-Gly) (interchain with G-Cter in SUMO1) cross-link involves residue Lys-18. A Phosphoserine modification is found at Ser-273. Disordered regions lie at residues 322 to 355 and 385 to 469; these read QQQP…QQHF and EIFE…PVRS. Residues 342–354 are compositionally biased toward polar residues; sequence HSASPSQGSSQQH. Basic residues predominate over residues 394–443; that stretch reads VAVRSRSRTHSRSRSRSPRKRRSRSRSGSRKRKHRKRSRSRSRERKRKSS. The span at 447–461 shows a compositional bias: basic and acidic residues; it reads SSERRAREREKERQK. Positions 477-551 constitute an RRM domain; the sequence is TTLWVGQVDK…KVIKIAWALN (75 aa). Thr-615 carries the phosphothreonine modification. At Ser-617 the chain carries Phosphoserine. A disordered region spans residues 753-808; it reads AGNVFNPPSKAEPEEKVPHLTEHQIPSGENTRPVIPSDIPSSAPMLAQPPGASNTS. Basic and acidic residues predominate over residues 763 to 774; sequence AEPEEKVPHLTE. Asymmetric dimethylarginine is present on residues Arg-915, Arg-925, and Arg-936. Positions 947-1063 are disordered; it reads QRGIPPPSVL…GRDHFGRPPV (117 aa). Residues 961–970 show a composition bias toward pro residues; the sequence is HPPPRGPFPP. 2 stretches are compositionally biased toward basic and acidic residues: residues 1009–1025 and 1032–1063; these read EGDR…REGI and DVRD…RPPV. Arg-1071 is subject to Asymmetric dimethylarginine. The segment at 1199 to 1268 is disordered; it reads ATSQRKGENV…VVESTETEGT (70 aa). A compositionally biased stretch (low complexity) spans 1249 to 1262; sequence GTAAGVESEAVVES.

Interacts with POLR2A; via C-terminal heptapeptide repeat domain (CTD) phosphorylated at 'Ser-2' and 'Ser-5'. Identified in a complex with CDC5L and other spliceosomal proteins.

The protein resides in the nucleus. It localises to the nucleus matrix. Its function is as follows. Anti-terminator protein required to prevent early mRNA termination during transcription. Together with SCAF4, acts by suppressing the use of early, alternative poly(A) sites, thereby preventing the accumulation of non-functional truncated proteins. Mechanistically, associates with the phosphorylated C-terminal heptapeptide repeat domain (CTD) of the largest RNA polymerase II subunit (POLR2A), and subsequently binds nascent RNA upstream of early polyadenylation sites to prevent premature mRNA transcript cleavage and polyadenylation. Independently of SCAF4, also acts as a positive regulator of transcript elongation. This is SR-related and CTD-associated factor 8 from Rattus norvegicus (Rat).